A 516-amino-acid chain; its full sequence is UDP-N-acetylmuramyl-tripeptide synthetase (516 aa).

Ser38 provides a ligand contact to UDP-N-acetyl-alpha-D-muramoyl-L-alanyl-D-glutamate. Residue 116-122 (GTKGKTT) coordinates ATP. Residues 162–163 (TT), Ser189, and Arg197 contribute to the UDP-N-acetyl-alpha-D-muramoyl-L-alanyl-D-glutamate site. Lys231 is subject to N6-carboxylysine.

The protein belongs to the MurCDEF family. MurE subfamily. Carboxylation is probably crucial for Mg(2+) binding and, consequently, for the gamma-phosphate positioning of ATP.

Its subcellular location is the cytoplasm. It functions in the pathway cell wall biogenesis; peptidoglycan biosynthesis. In terms of biological role, catalyzes the addition of an amino acid to the nucleotide precursor UDP-N-acetylmuramoyl-L-alanyl-D-glutamate (UMAG) in the biosynthesis of bacterial cell-wall peptidoglycan. In Lactobacillus delbrueckii subsp. bulgaricus (strain ATCC 11842 / DSM 20081 / BCRC 10696 / JCM 1002 / NBRC 13953 / NCIMB 11778 / NCTC 12712 / WDCM 00102 / Lb 14), this protein is UDP-N-acetylmuramyl-tripeptide synthetase.